We begin with the raw amino-acid sequence, 297 residues long: Bax inhibitor 1 (297 aa).

Residues Met1–Lys53 are Lumenal-facing. A helical membrane pass occupies residues Val54 to Val74. Residues Ser75–His85 are Cytoplasmic-facing. A helical membrane pass occupies residues Ile86–Ser106. The Lumenal segment spans residues Pro107–Lys146. Residues Leu147–Ala167 traverse the membrane as a helical segment. Over Tyr168 to Asp171 the chain is Cytoplasmic. Residues Thr172–Leu192 traverse the membrane as a helical segment. The Lumenal portion of the chain corresponds to Ser193–Tyr208. The chain crosses the membrane as a helical span at residues Trp209–Trp229. Residues Asn230 to Leu239 lie on the Cytoplasmic side of the membrane. A helical membrane pass occupies residues Tyr240–Phe260. Residues Arg261–Arg270 lie on the Lumenal side of the membrane. The chain crosses the membrane as a helical span at residues Cys271–Ala291. The Cytoplasmic segment spans residues Asn292–Asn297.

This sequence belongs to the BI1 family. LFG subfamily.

It is found in the endoplasmic reticulum membrane. Its subcellular location is the vacuole membrane. The protein resides in the mitochondrion membrane. Links the unfolded protein response and programmed cell death and mediates mitochondrial-dependent apoptosis. Induces cell death and disruption of the mitochondrial transmembrane potential via the mitochondrial phosphate carrier MIR1. Dispensible for starvation-induced autophagy. The protein is Bax inhibitor 1 (BXI1) of Saccharomyces cerevisiae (strain ATCC 204508 / S288c) (Baker's yeast).